We begin with the raw amino-acid sequence, 287 residues long: Rhomboid-like protein 18 (287 aa).

Helical transmembrane passes span 10–30 (NAPV…FFGI), 53–73 (LIIS…LYLL), 90–110 (VFIF…LSLT), 117–137 (LLTS…FLDI), 145–165 (VLGV…QLLL), and 172–192 (IFTG…IFGI). Positions 244 to 284 (EPSEEAIATLVSMGFDQNAARQALVHARNDVNAATNILLEA) constitute a UBA domain.

The protein belongs to the peptidase S54 family.

The protein localises to the membrane. In terms of biological role, probable rhomboid-type serine protease that catalyzes intramembrane proteolysis. The polypeptide is Rhomboid-like protein 18 (Arabidopsis thaliana (Mouse-ear cress)).